A 352-amino-acid polypeptide reads, in one-letter code: Phenylalanine--tRNA ligase alpha subunit (352 aa).

Position 258 (glutamate 258) interacts with Mg(2+).

It belongs to the class-II aminoacyl-tRNA synthetase family. Phe-tRNA synthetase alpha subunit type 1 subfamily. Tetramer of two alpha and two beta subunits. The cofactor is Mg(2+).

The protein resides in the cytoplasm. The catalysed reaction is tRNA(Phe) + L-phenylalanine + ATP = L-phenylalanyl-tRNA(Phe) + AMP + diphosphate + H(+). In Staphylococcus aureus (strain Mu3 / ATCC 700698), this protein is Phenylalanine--tRNA ligase alpha subunit.